Here is a 58-residue protein sequence, read N- to C-terminus: Large ribosomal subunit protein uL30 (58 aa).

It belongs to the universal ribosomal protein uL30 family. Part of the 50S ribosomal subunit.

This chain is Large ribosomal subunit protein uL30, found in Bacteroides fragilis (strain ATCC 25285 / DSM 2151 / CCUG 4856 / JCM 11019 / LMG 10263 / NCTC 9343 / Onslow / VPI 2553 / EN-2).